Reading from the N-terminus, the 623-residue chain is MNALERLEKLLDKEQFEKVKAIDNPELHEFLAEWIEWLEPDKVFVCTDSPEDEGYVRWKALYYGEERMLETPNHTVHYDNYYDQARDKANTAILLPGGKKLPYINTKDRDEGLKEIRELMKGIMKGKELFVCFFVLGPKNSIFTIPAVQLTDSAYVAHSEFILYRKGYEEFKRLGRSARFFRFVHSAGELDERKTSKNLDKRRIYIDLEDETVYSVNTQYGGNTIGLKKLAFRLTIKRAVEEGWLSEHMFLMRVNGPHGRKTYFTGAYPSMCGKTSTAMIPWENIVGDDLTFILPVNGIARGANVEKGVFGIIQGVNPEDDPIIWQVLHSPVEIIFSNVLVKDGKPYWNDMGIEIPDEGENHSGKWWRGKKDAEGNEIPPSHKNARFTVSLEHFPNVDMEALENPCGVEVGGMIFGGRDADTWPPVREAFNWEHGVITMGASLESETTAATLGKEGVRAFNPMAILDFMSVHLGDYLRNYLEFGRKLKKTPKIFAVNYFLRENGVWLNHKLDKAVWLKWMELRVHGDVEAIETPIGYIPKYKDLAKLFKDVLNKEYTKEDYERQFKIRVPELLAKIDRIEEIYRKLDNVPEELFKVLEEERQRLLEAREKYGDYISPFALEGE.

Residues Arg86 and 220 to 222 (YGG) each bind substrate. Mn(2+)-binding residues include Lys229 and His248. Residue Ser270 participates in substrate binding. 271–276 (MCGKTS) contributes to the GTP binding site. Residue Cys272 is part of the active site. A Mn(2+)-binding site is contributed by Asp289. Residue 384 to 386 (NAR) coordinates substrate. Residues Arg386 and Arg418 each coordinate GTP.

This sequence belongs to the phosphoenolpyruvate carboxykinase [GTP] family. As to quaternary structure, homotetramer. Requires Mn(2+) as cofactor.

The protein localises to the cytoplasm. It catalyses the reaction oxaloacetate + GTP = phosphoenolpyruvate + GDP + CO2. It functions in the pathway carbohydrate biosynthesis; gluconeogenesis. Functionally, involved in the gluconeogenesis. Catalyzes the conversion of oxaloacetate (OAA) to phosphoenolpyruvate (PEP), the rate-limiting step in the metabolic pathway that produces glucose from lactate and other precursors derived from the citric acid cycle. The chain is Phosphoenolpyruvate carboxykinase [GTP] (pckG) from Thermococcus kodakarensis (strain ATCC BAA-918 / JCM 12380 / KOD1) (Pyrococcus kodakaraensis (strain KOD1)).